Consider the following 203-residue polypeptide: Histidine biosynthesis bifunctional protein HisIE (203 aa).

Positions 1–114 are phosphoribosyl-AMP cyclohydrolase; the sequence is MLTEQQRREL…FGDTAHQWLF (114 aa). Positions 115–203 are phosphoribosyl-ATP pyrophosphohydrolase; the sequence is LYQLEQLLAE…VIENLRKRHQ (89 aa).

The protein in the N-terminal section; belongs to the PRA-CH family. It in the C-terminal section; belongs to the PRA-PH family.

It is found in the cytoplasm. It carries out the reaction 1-(5-phospho-beta-D-ribosyl)-ATP + H2O = 1-(5-phospho-beta-D-ribosyl)-5'-AMP + diphosphate + H(+). The catalysed reaction is 1-(5-phospho-beta-D-ribosyl)-5'-AMP + H2O = 1-(5-phospho-beta-D-ribosyl)-5-[(5-phospho-beta-D-ribosylamino)methylideneamino]imidazole-4-carboxamide. The protein operates within amino-acid biosynthesis; L-histidine biosynthesis; L-histidine from 5-phospho-alpha-D-ribose 1-diphosphate: step 2/9. Its pathway is amino-acid biosynthesis; L-histidine biosynthesis; L-histidine from 5-phospho-alpha-D-ribose 1-diphosphate: step 3/9. This chain is Histidine biosynthesis bifunctional protein HisIE, found in Shigella sonnei (strain Ss046).